The primary structure comprises 302 residues: Sulfate adenylyltransferase subunit 2 (302 aa).

The tract at residues 280–302 is disordered; the sequence is RQGRLIDSDQSASMEQKKRQGYF.

Belongs to the PAPS reductase family. CysD subfamily. Heterodimer composed of CysD, the smaller subunit, and CysN.

The catalysed reaction is sulfate + ATP + H(+) = adenosine 5'-phosphosulfate + diphosphate. Its pathway is sulfur metabolism; hydrogen sulfide biosynthesis; sulfite from sulfate: step 1/3. In terms of biological role, with CysN forms the ATP sulfurylase (ATPS) that catalyzes the adenylation of sulfate producing adenosine 5'-phosphosulfate (APS) and diphosphate, the first enzymatic step in sulfur assimilation pathway. APS synthesis involves the formation of a high-energy phosphoric-sulfuric acid anhydride bond driven by GTP hydrolysis by CysN coupled to ATP hydrolysis by CysD. This is Sulfate adenylyltransferase subunit 2 from Shewanella putrefaciens (strain CN-32 / ATCC BAA-453).